The primary structure comprises 220 residues: 7-cyano-7-deazaguanine synthase (220 aa).

7-17 (LSGGMDSSITA) is an ATP binding site. Zn(2+) contacts are provided by Cys185, Cys193, Cys196, and Cys199.

Belongs to the QueC family. Zn(2+) is required as a cofactor.

It catalyses the reaction 7-carboxy-7-deazaguanine + NH4(+) + ATP = 7-cyano-7-deazaguanine + ADP + phosphate + H2O + H(+). The protein operates within purine metabolism; 7-cyano-7-deazaguanine biosynthesis. Its function is as follows. Catalyzes the ATP-dependent conversion of 7-carboxy-7-deazaguanine (CDG) to 7-cyano-7-deazaguanine (preQ(0)). In Nitratiruptor sp. (strain SB155-2), this protein is 7-cyano-7-deazaguanine synthase.